Here is a 443-residue protein sequence, read N- to C-terminus: Amino-acid acetyltransferase (443 aa).

The region spanning 296-434 (EQIRRATIND…KKLMYNYQRR (139 aa)) is the N-acetyltransferase domain.

The protein belongs to the acetyltransferase family. ArgA subfamily. As to quaternary structure, homohexamer.

The protein localises to the cytoplasm. It carries out the reaction L-glutamate + acetyl-CoA = N-acetyl-L-glutamate + CoA + H(+). It functions in the pathway amino-acid biosynthesis; L-arginine biosynthesis; N(2)-acetyl-L-ornithine from L-glutamate: step 1/4. In Escherichia fergusonii (strain ATCC 35469 / DSM 13698 / CCUG 18766 / IAM 14443 / JCM 21226 / LMG 7866 / NBRC 102419 / NCTC 12128 / CDC 0568-73), this protein is Amino-acid acetyltransferase.